The chain runs to 546 residues: Chaperonin GroEL (546 aa).

ATP is bound by residues 30–33, Lys51, 87–91, Gly415, 479–481, and Asp495; these read TLGP, DGTTT, and NAA.

Belongs to the chaperonin (HSP60) family. As to quaternary structure, forms a cylinder of 14 subunits composed of two heptameric rings stacked back-to-back. Interacts with the co-chaperonin GroES.

It is found in the cytoplasm. It catalyses the reaction ATP + H2O + a folded polypeptide = ADP + phosphate + an unfolded polypeptide.. Together with its co-chaperonin GroES, plays an essential role in assisting protein folding. The GroEL-GroES system forms a nano-cage that allows encapsulation of the non-native substrate proteins and provides a physical environment optimized to promote and accelerate protein folding. The chain is Chaperonin GroEL from Pseudomonas putida (strain W619).